The sequence spans 215 residues: Pyrophosphatase PpaX (215 aa).

Catalysis depends on Asp9, which acts as the Nucleophile.

This sequence belongs to the HAD-like hydrolase superfamily. PpaX family. Requires Mg(2+) as cofactor.

The catalysed reaction is diphosphate + H2O = 2 phosphate + H(+). Hydrolyzes pyrophosphate formed during P-Ser-HPr dephosphorylation by HPrK/P. Might play a role in controlling the intracellular pyrophosphate pool. This Halalkalibacterium halodurans (strain ATCC BAA-125 / DSM 18197 / FERM 7344 / JCM 9153 / C-125) (Bacillus halodurans) protein is Pyrophosphatase PpaX.